A 115-amino-acid chain; its full sequence is Histone H2A-Bbd type 1 (115 aa).

Residues 1–21 (MPRRRRRRGSSGAGGRGRTCS) are disordered. The tract at residues 87–115 (LLDMVVHNDRLLSTLFNTTTISQVAPGED) is docking domain.

It belongs to the histone H2A family. In terms of assembly, the nucleosome is a histone octamer containing two molecules each of H2A, H2B, H3 and H4 assembled in one H3-H4 heterotetramer and two H2A-H2B heterodimers. May be incorporated into a proportion of nucleosomes, replacing one or more H2A molecules. In terms of tissue distribution, present in mature sperm.

The protein resides in the nucleus. The protein localises to the chromosome. Its function is as follows. Atypical histone H2A which can replace conventional H2A in some nucleosomes and is associated with active transcription and mRNA processing. Nucleosomes wrap and compact DNA into chromatin, limiting DNA accessibility to the cellular machineries which require DNA as a template. Histones thereby play a central role in transcription regulation, DNA repair, DNA replication and chromosomal stability. Nucleosomes containing this histone are less rigid and organize less DNA than canonical nucleosomes in vivo. They are enriched in actively transcribed genes and associate with the elongating form of RNA polymerase. They associate with spliceosome components and are required for mRNA splicing. The sequence is that of Histone H2A-Bbd type 1 from Homo sapiens (Human).